A 556-amino-acid chain; its full sequence is Polypeptide N-acetylgalactosaminyltransferase 13 (556 aa).

The Cytoplasmic segment spans residues 1–4; that stretch reads MRRF. Residues 5–27 traverse the membrane as a helical; Signal-anchor for type II membrane protein segment; it reads VYCKVVLATSLMWVLVDVFLLLY. Over 28–556 the chain is Lumenal; sequence FSECNKCDDK…WLLRNMTLGT (529 aa). N-linked (GlcNAc...) asparagine glycosylation is found at asparagine 94 and asparagine 116. 5 cysteine pairs are disulfide-bonded: cysteine 105-cysteine 338, cysteine 329-cysteine 407, cysteine 441-cysteine 458, cysteine 481-cysteine 496, and cysteine 522-cysteine 539. Residues 114 to 224 are catalytic subdomain A; it reads LPNTSVVIVF…LGWLEPLLAR (111 aa). The substrate site is built by aspartate 155 and arginine 185. Residues aspartate 208 and histidine 210 each coordinate Mn(2+). Residues 284-346 form a catalytic subdomain B region; that stretch reads PVRTPTMAGG…TCSHVGHVFR (63 aa). Tryptophan 315 is a substrate binding site. Histidine 343 provides a ligand contact to Mn(2+). The substrate site is built by arginine 346 and tyrosine 351. A Ricin B-type lectin domain is found at 428 to 550; the sequence is YSLGEIRNVE…GSRSQQWLLR (123 aa). N-linked (GlcNAc...) asparagine glycosylation occurs at asparagine 551.

This sequence belongs to the glycosyltransferase 2 family. GalNAc-T subfamily. It depends on Mn(2+) as a cofactor. As to expression, specifically expressed in neuronal cells. Expressed in fetal brain, whole adult brain, cerebral cortex and cerebellum. Not expressed in other tissues tested.

The protein localises to the golgi apparatus membrane. The enzyme catalyses L-seryl-[protein] + UDP-N-acetyl-alpha-D-galactosamine = a 3-O-[N-acetyl-alpha-D-galactosaminyl]-L-seryl-[protein] + UDP + H(+). It carries out the reaction L-threonyl-[protein] + UDP-N-acetyl-alpha-D-galactosamine = a 3-O-[N-acetyl-alpha-D-galactosaminyl]-L-threonyl-[protein] + UDP + H(+). It functions in the pathway protein modification; protein glycosylation. Functionally, catalyzes the initial reaction in O-linked oligosaccharide biosynthesis, the transfer of an N-acetyl-D-galactosamine (GalNAc) residue from UDP-GalNAc to a serine or threonine residue on the protein receptor. Generates GalNAc-O-Ser/Thr structure also known as Tn antigen, which itself is immunogenic but also serves as a precursor for the synthesis of different mucin-type O-glycan core structures. Contributes to the synthesis of O-linked glycans on mucins and proteoglycans of the central nervous system. May promote neurogenesis through glycosylation and stabilization of PDPN. Its function is as follows. Can glycosylate both unmodified peptides and glycopeptides that already contain an O-linked GalNAc sugar. Transfers GalNAc to Thr-/Ser-rich tandem repeats GTTPSPVPTTSTTSAP of MUC5AC, specifically on Thr-3 of non-glycosylated MUC5AC peptide, on Thr-12 and Thr-13 of preglycosylated MUC5AC at Thr-3 (MUC5AC-3), on Thr-3 of preglycosylated MUC5AC at Thr-13 (MUC5AC-13) and on Thr-12 of preglycosylated MUC5AC at Thr-3 and Thr-13 (MUC5AC-3,13). Transfers GalNAc to three consecutive serine/threonine residues on SDC3 forming a triplet-Tn epitope expressed in Purkinje cells of the developing brain. Can glycosylate both unmodified peptides and glycopeptides that already contain an O-linked GalNAc sugar. Transfers GalNAc to Thr-/Ser-rich tandem repeats GTTPSPVPTTSTTSAP of MUC5AC, specifically on Thr-3 of non-glycosylated MUC5AC peptide, on Thr-12 and Thr-13 of preglycosylated MUC5AC at Thr-3 (MUC5AC-3), on Thr-3 of preglycosylated MUC5AC at Thr-13 (MUC5AC-13) and on Thr-12 of preglycosylated MUC5AC at Thr-3 and Thr-13 (MUC5AC-3,13). The polypeptide is Polypeptide N-acetylgalactosaminyltransferase 13 (GALNT13) (Homo sapiens (Human)).